The primary structure comprises 137 residues: Putative mucosal pentraxin homolog (137 aa).

The Pentraxin (PTX) domain maps to 1–137; it reads MGMYLLHIGN…YVVTKPKVWA (137 aa). Ca(2+)-binding residues include Glu-73, Asp-75, and Gln-85.

The protein belongs to the pentraxin family. In terms of tissue distribution, not expressed in the intestinal tract including ascending colon, descending colon and rectum. Not expressed in the human colon cancer cell lines HT-29 and CaCo-2.

This chain is Putative mucosal pentraxin homolog (MPTX1), found in Homo sapiens (Human).